A 447-amino-acid chain; its full sequence is Probable asparagine--tRNA ligase, cytoplasmic (447 aa).

This sequence belongs to the class-II aminoacyl-tRNA synthetase family.

The protein resides in the cytoplasm. It carries out the reaction tRNA(Asn) + L-asparagine + ATP = L-asparaginyl-tRNA(Asn) + AMP + diphosphate + H(+). The chain is Probable asparagine--tRNA ligase, cytoplasmic from Vairimorpha ceranae (strain BRL01) (Microsporidian parasite).